We begin with the raw amino-acid sequence, 378 residues long: MLETVTDVASFVHYGNTSVFPTADNSSEIIPDGESNISKPHRCLQVLYDDIGTSRVRYWDVMLLIPNVAFLVFLMWKLPSARAKIRLTSSPIFVAFYILVFVVAAVGITRAIVSMTVSTSSAATLIDKVLWEITRFFLLAIELSVIILGLAFGHLESKSSIKRVLAITAVLSLAYSITQGTLEIRFPDKHLSAKDFNIYGHGGRHFWLASSCFFFLVYSLIVILPKTPIRERISLPSKRSFYVYSGILALLNLVQGLGSALLCADIIEGLCCVDVTTFLYFSVFAPLIYVTFLKGFFGSEPKILFSYKSQIDEPEDSDVHLPHTSSSGLGRKDLDRGSYSSTQIDGSGAYLDDVVSGPFGGAHSINSVDSDRWRSINT.

3 N-linked (GlcNAc...) asparagine glycosylation sites follow: N16, N25, and N36. The next 7 helical transmembrane spans lie at 61-81 (VMLLIPNVAFLVFLMWKLPSA), 88-108 (TSSPIFVAFYILVFVVAAVGI), 136-156 (FFLLAIELSVIILGLAFGHLE), 164-184 (VLAITAVLSLAYSITQGTLEI), 205-225 (HFWLASSCFFFLVYSLIVILP), 247-267 (ILALLNLVQGLGSALLCADII), and 278-298 (FLYFSVFAPLIYVTFLKGFFG). The segment at 316 to 335 (DSDVHLPHTSSSGLGRKDLD) is disordered.

It belongs to the UPF0359 family.

The protein localises to the membrane. This chain is Transmembrane protein adipocyte-associated 1 homolog (tpra1), found in Danio rerio (Zebrafish).